The following is a 40-amino-acid chain: Probable non-specific lipid-transfer protein (40 aa).

Belongs to the plant LTP family. Post-translationally, phosphorylated by Ca(2+)-dependent protein kinase.

Plant non-specific lipid-transfer proteins transfer phospholipids as well as galactolipids across membranes. May play a role in wax or cutin deposition in the cell walls of expanding epidermal cells and certain secretory tissues. This chain is Probable non-specific lipid-transfer protein, found in Triticum aestivum (Wheat).